Here is a 37-residue protein sequence, read N- to C-terminus: Unknown protein 25 (37 aa).

The polypeptide is Unknown protein 25 (Pseudotsuga menziesii (Douglas-fir)).